An 833-amino-acid chain; its full sequence is CUB domain-containing protein 1 (833 aa).

Positions 1 to 29 (MAHSACGFSVALLGALLLGTARLLRGTEA) are cleaved as a signal peptide. Topologically, residues 30–666 (SEIALPQRSG…VTLTPRTVDL (637 aa)) are extracellular. Asn-122, Asn-180, Asn-205, Asn-270, Asn-310, Asn-342, and Asn-386 each carry an N-linked (GlcNAc...) asparagine glycan. In terms of domain architecture, CUB spans 417-540 (CLDHRYCYRQ…QGLIVSYTPY (124 aa)). Residues Cys-476 and Cys-499 are joined by a disulfide bond. The helical transmembrane segment at 667 to 687 (AVVIGAAGGGALLLFALVLII) threads the bilayer. Topologically, residues 688 to 833 (CFVKKKKKVD…HTQGPVETEE (146 aa)) are cytoplasmic. Position 731 is a phosphotyrosine (Tyr-731). Positions 783-833 (AKFTAEELAPSSPPESESEPYTFSHPNKGEIGVRETDIPLLHTQGPVETEE) are disordered. The span at 809 to 819 (NKGEIGVRETD) shows a compositional bias: basic and acidic residues.

In terms of assembly, interacts with CDH2/N-cadherin, CDH3/P-cadherin, SDC1/syndecan-1, SDC4/syndecan-4 and the serine protease ST14/MT-SP1. Also interacts SRC and PRKCG/protein kinase C gamma. Post-translationally, phosphorylated on tyrosine by kinases of the SRC family such as SRC and YES as well as by the protein kinase C gamma/PRKCG. Dephosphorylated by phosphotyrosine phosphatases. Also phosphorylated by suramin, a heparin analog. Tyrosine phosphorylated in response to dissociation of integrin alpha-6 beta-4 from laminin-5. N-glycosylated. In terms of processing, a soluble form may also be produced by proteolytic cleavage at the cell surface (shedding). Another peptide of 80 kDa (p80) is present in cultured keratinocytes probably due to tryptic cleavage at an unidentified site on the N-terminal side. Converted to p80 by plasmin, a trypsin-like protease.

It localises to the cell membrane. In terms of biological role, may be involved in cell adhesion and cell matrix association. May play a role in the regulation of anchorage versus migration or proliferation versus differentiation via its phosphorylation. May be a novel marker for leukemia diagnosis and for immature hematopoietic stem cell subsets. Belongs to the tetraspanin web involved in tumor progression and metastasis. The polypeptide is CUB domain-containing protein 1 (Cdcp1) (Mus musculus (Mouse)).